Reading from the N-terminus, the 949-residue chain is Glycine dehydrogenase (decarboxylating) (949 aa).

Residue Lys-697 is modified to N6-(pyridoxal phosphate)lysine.

Belongs to the GcvP family. As to quaternary structure, the glycine cleavage system is composed of four proteins: P, T, L and H. It depends on pyridoxal 5'-phosphate as a cofactor.

It carries out the reaction N(6)-[(R)-lipoyl]-L-lysyl-[glycine-cleavage complex H protein] + glycine + H(+) = N(6)-[(R)-S(8)-aminomethyldihydrolipoyl]-L-lysyl-[glycine-cleavage complex H protein] + CO2. In terms of biological role, the glycine cleavage system catalyzes the degradation of glycine. The P protein binds the alpha-amino group of glycine through its pyridoxal phosphate cofactor; CO(2) is released and the remaining methylamine moiety is then transferred to the lipoamide cofactor of the H protein. The protein is Glycine dehydrogenase (decarboxylating) of Deinococcus radiodurans (strain ATCC 13939 / DSM 20539 / JCM 16871 / CCUG 27074 / LMG 4051 / NBRC 15346 / NCIMB 9279 / VKM B-1422 / R1).